We begin with the raw amino-acid sequence, 266 residues long: Phosphate import ATP-binding protein PstB (266 aa).

One can recognise an ABC transporter domain in the interval 15–261 (VQKSVVNKLN…PKNKQTEDYI (247 aa)). Residue 50–57 (GPSGCGKS) coordinates ATP.

The protein belongs to the ABC transporter superfamily. Phosphate importer (TC 3.A.1.7) family. In terms of assembly, the complex is composed of two ATP-binding proteins (PstB), two transmembrane proteins (PstC and PstA) and a solute-binding protein (PstS).

It is found in the cell inner membrane. It catalyses the reaction phosphate(out) + ATP + H2O = ADP + 2 phosphate(in) + H(+). Its function is as follows. Part of the ABC transporter complex PstSACB involved in phosphate import. Responsible for energy coupling to the transport system. The protein is Phosphate import ATP-binding protein PstB of Nitrosomonas europaea (strain ATCC 19718 / CIP 103999 / KCTC 2705 / NBRC 14298).